A 462-amino-acid polypeptide reads, in one-letter code: Glycine--tRNA ligase (462 aa).

Residues R101 and E164 each contribute to the substrate site. Residues 196-198, 206-211, 283-284, and 327-330 each bind ATP; these read RNE, FRTREF, EL, and GVDR. Residue 211 to 215 participates in substrate binding; that stretch reads FEQME. Position 323–327 (323–327) interacts with substrate; sequence EPSAG.

Belongs to the class-II aminoacyl-tRNA synthetase family. Homodimer.

It localises to the cytoplasm. It catalyses the reaction tRNA(Gly) + glycine + ATP = glycyl-tRNA(Gly) + AMP + diphosphate. In terms of biological role, catalyzes the attachment of glycine to tRNA(Gly). This is Glycine--tRNA ligase from Thermobifida fusca (strain YX).